The primary structure comprises 217 residues: Probable transaldolase (217 aa).

The Schiff-base intermediate with substrate role is filled by K83.

It belongs to the transaldolase family. Type 3B subfamily.

The protein localises to the cytoplasm. The catalysed reaction is D-sedoheptulose 7-phosphate + D-glyceraldehyde 3-phosphate = D-erythrose 4-phosphate + beta-D-fructose 6-phosphate. Its pathway is carbohydrate degradation; pentose phosphate pathway; D-glyceraldehyde 3-phosphate and beta-D-fructose 6-phosphate from D-ribose 5-phosphate and D-xylulose 5-phosphate (non-oxidative stage): step 2/3. Its function is as follows. Transaldolase is important for the balance of metabolites in the pentose-phosphate pathway. The protein is Probable transaldolase of Sinorhizobium medicae (strain WSM419) (Ensifer medicae).